A 200-amino-acid polypeptide reads, in one-letter code: 3-isopropylmalate dehydratase small subunit (200 aa).

The protein belongs to the LeuD family. LeuD type 1 subfamily. As to quaternary structure, heterodimer of LeuC and LeuD.

The catalysed reaction is (2R,3S)-3-isopropylmalate = (2S)-2-isopropylmalate. Its pathway is amino-acid biosynthesis; L-leucine biosynthesis; L-leucine from 3-methyl-2-oxobutanoate: step 2/4. In terms of biological role, catalyzes the isomerization between 2-isopropylmalate and 3-isopropylmalate, via the formation of 2-isopropylmaleate. The polypeptide is 3-isopropylmalate dehydratase small subunit (Aliivibrio fischeri (strain MJ11) (Vibrio fischeri)).